A 297-amino-acid polypeptide reads, in one-letter code: Cell division protein ZipA (297 aa).

A topological domain (periplasmic) is located at residue methionine 1. A helical transmembrane segment spans residues 2-22 (EIGLREWLILIGIIVIAGILF). The Cytoplasmic segment spans residues 23-297 (DGWRRMRGGK…FERRALTQKR (275 aa)). The segment at 48 to 151 (DEEGGSAEVL…AAPASNSVKE (104 aa)) is disordered. A compositionally biased stretch (basic and acidic residues) spans 83–92 (ARDREREPKP). The segment covering 124-133 (LFSDSDDDFA) has biased composition (acidic residues).

It belongs to the ZipA family. In terms of assembly, interacts with FtsZ via their C-terminal domains.

Its subcellular location is the cell inner membrane. Essential cell division protein that stabilizes the FtsZ protofilaments by cross-linking them and that serves as a cytoplasmic membrane anchor for the Z ring. Also required for the recruitment to the septal ring of downstream cell division proteins. The protein is Cell division protein ZipA of Pseudomonas putida (strain ATCC 47054 / DSM 6125 / CFBP 8728 / NCIMB 11950 / KT2440).